The following is a 493-amino-acid chain: Mitochondrial distribution and morphology protein 10 (493 aa).

The protein belongs to the MDM10 family. In terms of assembly, component of the ER-mitochondria encounter structure (ERMES) or MDM complex, composed of MMM1, MDM10, MDM12 and MDM34. Associates with the mitochondrial outer membrane sorting assembly machinery SAM(core) complex, which consists of SAM35, SAM37 and SAM50, to form a SAM(holo) complex.

Its subcellular location is the mitochondrion outer membrane. Its function is as follows. Component of the ERMES/MDM complex, which serves as a molecular tether to connect the endoplasmic reticulum and mitochondria. Components of this complex are involved in the control of mitochondrial shape and protein biogenesis and may function in phospholipid exchange. MDM10 is involved in the late assembly steps of the general translocase of the mitochondrial outer membrane (TOM complex). Functions in the TOM40-specific route of the assembly of outer membrane beta-barrel proteins, including the association of TOM40 with the receptor TOM22 and small TOM proteins. Can associate with the SAM(core) complex as well as the MDM12-MMM1 complex, both involved in late steps of the major beta-barrel assembly pathway, that is responsible for biogenesis of all outer membrane beta-barrel proteins. May act as a switch that shuttles between both complexes and channels precursor proteins into the TOM40-specific pathway. Plays a role in mitochondrial morphology and in the inheritance of mitochondria. This Saccharomyces cerevisiae (strain YJM789) (Baker's yeast) protein is Mitochondrial distribution and morphology protein 10.